The sequence spans 478 residues: Cytochrome c-552 (478 aa).

The first 26 residues, 1–26 (MTRIKINARRIFSLLIPFFFFTSVHA), serve as a signal peptide directing secretion. H94 contacts heme c. Positions 122, 125, and 126 each coordinate heme. Heme c contacts are provided by C160, C163, H164, C209, C212, and H213. 4 residues coordinate Ca(2+): E215, Y216, K261, and Q263. Substrate is bound at residue Y216. H264 lines the substrate pocket. Residues H275, C282, C285, H286, H301, C314, C317, H318, and H393 each coordinate heme c.

Belongs to the cytochrome c-552 family. Requires Ca(2+) as cofactor. Heme c serves as cofactor.

The protein localises to the periplasm. The enzyme catalyses 6 Fe(III)-[cytochrome c] + NH4(+) + 2 H2O = 6 Fe(II)-[cytochrome c] + nitrite + 8 H(+). Its pathway is nitrogen metabolism; nitrate reduction (assimilation). Catalyzes the reduction of nitrite to ammonia, consuming six electrons in the process. The polypeptide is Cytochrome c-552 (Escherichia coli O17:K52:H18 (strain UMN026 / ExPEC)).